Reading from the N-terminus, the 275-residue chain is Phosphonoacetaldehyde hydrolase (275 aa).

Residue D15 is the Nucleophile of the active site. Mg(2+)-binding residues include D15 and A17. The active-site Schiff-base intermediate with substrate is the K56. D189 is a binding site for Mg(2+).

Belongs to the HAD-like hydrolase superfamily. PhnX family. In terms of assembly, homodimer. Mg(2+) serves as cofactor.

The catalysed reaction is phosphonoacetaldehyde + H2O = acetaldehyde + phosphate + H(+). Functionally, involved in phosphonate degradation. In Pseudomonas putida (strain ATCC 700007 / DSM 6899 / JCM 31910 / BCRC 17059 / LMG 24140 / F1), this protein is Phosphonoacetaldehyde hydrolase.